The following is a 670-amino-acid chain: Transketolase, chromosomal (670 aa).

Histidine 32 lines the substrate pocket. Thiamine diphosphate is bound by residues histidine 72 and 120 to 122; that span reads GPL. Aspartate 161 contacts Mg(2+). 2 residues coordinate thiamine diphosphate: glycine 162 and asparagine 191. Mg(2+) is bound by residues asparagine 191 and isoleucine 193. Substrate is bound by residues histidine 267, arginine 364, and serine 391. Histidine 267 contributes to the thiamine diphosphate binding site. The Proton donor role is filled by glutamate 417. Phenylalanine 443 is a thiamine diphosphate binding site. Substrate contacts are provided by histidine 467, aspartate 475, and arginine 526.

This sequence belongs to the transketolase family. In terms of assembly, homodimer. The cofactor is Mg(2+). Ca(2+) is required as a cofactor. Requires Mn(2+) as cofactor. It depends on Co(2+) as a cofactor. Thiamine diphosphate serves as cofactor.

It carries out the reaction D-sedoheptulose 7-phosphate + D-glyceraldehyde 3-phosphate = aldehydo-D-ribose 5-phosphate + D-xylulose 5-phosphate. The protein operates within carbohydrate biosynthesis; Calvin cycle. Its function is as follows. Catalyzes the transfer of a two-carbon ketol group from a ketose donor to an aldose acceptor, via a covalent intermediate with the cofactor thiamine pyrophosphate. This is Transketolase, chromosomal (cbbTC) from Cupriavidus necator (strain ATCC 17699 / DSM 428 / KCTC 22496 / NCIMB 10442 / H16 / Stanier 337) (Ralstonia eutropha).